A 154-amino-acid chain; its full sequence is Phosphopantetheine adenylyltransferase (154 aa).

This sequence belongs to the eukaryotic CoaD family.

It is found in the cytoplasm. It carries out the reaction (R)-4'-phosphopantetheine + ATP + H(+) = 3'-dephospho-CoA + diphosphate. It functions in the pathway cofactor biosynthesis; coenzyme A biosynthesis. Functionally, reversibly transfers an adenylyl group from ATP to 4'-phosphopantetheine, yielding dephospho-CoA (dPCoA) and pyrophosphate. This Methanosarcina mazei (strain ATCC BAA-159 / DSM 3647 / Goe1 / Go1 / JCM 11833 / OCM 88) (Methanosarcina frisia) protein is Phosphopantetheine adenylyltransferase.